The chain runs to 72 residues: Translation initiation factor IF-1 (72 aa).

The region spanning 1-72 (MSKDDSIEFE…TKGRITYRMK (72 aa)) is the S1-like domain.

The protein belongs to the IF-1 family. In terms of assembly, component of the 30S ribosomal translation pre-initiation complex which assembles on the 30S ribosome in the order IF-2 and IF-3, IF-1 and N-formylmethionyl-tRNA(fMet); mRNA recruitment can occur at any time during PIC assembly.

Its subcellular location is the cytoplasm. Its function is as follows. One of the essential components for the initiation of protein synthesis. Stabilizes the binding of IF-2 and IF-3 on the 30S subunit to which N-formylmethionyl-tRNA(fMet) subsequently binds. Helps modulate mRNA selection, yielding the 30S pre-initiation complex (PIC). Upon addition of the 50S ribosomal subunit IF-1, IF-2 and IF-3 are released leaving the mature 70S translation initiation complex. This Xanthomonas euvesicatoria pv. vesicatoria (strain 85-10) (Xanthomonas campestris pv. vesicatoria) protein is Translation initiation factor IF-1.